We begin with the raw amino-acid sequence, 1257 residues long: Endochitinase A (1257 aa).

An N-terminal signal peptide occupies residues 1 to 21; the sequence is MVFKPLTIAAAIAGLTPFVSA. Positions 28–339 constitute a GH18 domain; it reads SNVAVYYGQG…DVIKDILVAV (312 aa). Residue Glu-175 is the Proton donor of the active site. Disordered regions lie at residues 364 to 429, 595 to 980, and 1141 to 1174; these read TPVA…STPV, TPAA…LAPI, and DALT…PTTT. Residues 595–696 are compositionally biased toward low complexity; sequence TPAASSSPAV…STPVRSTSSV (102 aa). Over residues 700–715 the composition is skewed to polar residues; it reads KSSSAPVIPKPSSTVI. Over residues 716-935 the composition is skewed to low complexity; the sequence is ATFTSSSGSL…ASGSGAQDST (220 aa). Residue Asn-825 is glycosylated (N-linked (GlcNAc...) asparagine). The segment covering 940 to 964 has biased composition (polar residues); sequence HASTLSPSYSTPLASASGQTGSPTT. N-linked (GlcNAc...) asparagine glycosylation occurs at Asn-973. Residues 1145 to 1154 are compositionally biased toward polar residues; sequence ASPSGSQPAG. Residues 1156–1174 show a composition bias toward low complexity; sequence SSPGQSAPTAPASTAPTTT. Gly-1231 carries the GPI-anchor amidated glycine lipid modification. Residues 1232–1257 constitute a propeptide, removed in mature form; that stretch reads AASRVSRLQHGAGAVSAFALFLLAAI.

Belongs to the glycosyl hydrolase 18 family. Chitinase class III subfamily. In terms of processing, O-glycosylated.

It is found in the cell membrane. Its subcellular location is the secreted. The protein localises to the cell wall. The catalysed reaction is Random endo-hydrolysis of N-acetyl-beta-D-glucosaminide (1-&gt;4)-beta-linkages in chitin and chitodextrins.. In terms of biological role, GPI-anchored chitinase involved in the degradation of chitin, a component of the cell walls of fungi and exoskeletal elements of some animals (including worms and arthropods). Required to reshape the cell wall at the sites where cell wall remodeling and/or cell wall maturation actively take place such as sites of conidia formation. The polypeptide is Endochitinase A (ctcA) (Aspergillus niger (strain ATCC MYA-4892 / CBS 513.88 / FGSC A1513)).